The primary structure comprises 118 residues: MTKILKVKLMKIALPIDNNRLSPHFGRCEKFMIVEIENGEIKNKEIIENTARNGMHGVGTTSASLIANMGVNAIIVQNIGPKAYSVFKQLGIDVYKANTTSIDECIKLFLEGKLEKFE.

This is an uncharacterized protein from Methanocaldococcus jannaschii (strain ATCC 43067 / DSM 2661 / JAL-1 / JCM 10045 / NBRC 100440) (Methanococcus jannaschii).